Reading from the N-terminus, the 421-residue chain is UV-B-induced protein At3g17800, chloroplastic (421 aa).

2 disordered regions span residues 1-40 (MDAL…RSGS) and 74-95 (VRAS…IAPL). The transit peptide at 1-75 (MDALTSSLVR…AKTRRSFVVR (75 aa)) directs the protein to the chloroplast. The segment covering 16-28 (SRTSDNGSGSMFL) has biased composition (polar residues). Residues 74–88 (VRASSASNDASSGSS) are compositionally biased toward low complexity.

The protein resides in the plastid. It is found in the chloroplast. This is UV-B-induced protein At3g17800, chloroplastic from Arabidopsis thaliana (Mouse-ear cress).